A 158-amino-acid chain; its full sequence is NAD(P)H-quinone oxidoreductase subunit N (158 aa).

Belongs to the complex I NdhN subunit family. NDH-1 can be composed of about 15 different subunits; different subcomplexes with different compositions have been identified which probably have different functions.

Its subcellular location is the cellular thylakoid membrane. It carries out the reaction a plastoquinone + NADH + (n+1) H(+)(in) = a plastoquinol + NAD(+) + n H(+)(out). It catalyses the reaction a plastoquinone + NADPH + (n+1) H(+)(in) = a plastoquinol + NADP(+) + n H(+)(out). Its function is as follows. NDH-1 shuttles electrons from an unknown electron donor, via FMN and iron-sulfur (Fe-S) centers, to quinones in the respiratory and/or the photosynthetic chain. The immediate electron acceptor for the enzyme in this species is believed to be plastoquinone. Couples the redox reaction to proton translocation, and thus conserves the redox energy in a proton gradient. Cyanobacterial NDH-1 also plays a role in inorganic carbon-concentration. In Prochlorococcus marinus (strain AS9601), this protein is NAD(P)H-quinone oxidoreductase subunit N.